The primary structure comprises 65 residues: Putative beta-neurotoxin RjAa4 (65 aa).

The LCN-type CS-alpha/beta domain occupies 1–64 (KEGYPMGRDG…VWDSSTNKCG (64 aa)). 4 disulfides stabilise this stretch: Cys-11–Cys-63, Cys-15–Cys-37, Cys-22–Cys-44, and Cys-26–Cys-46.

It belongs to the long (4 C-C) scorpion toxin superfamily. Sodium channel inhibitor family. Beta subfamily. Expressed by the venom gland.

It localises to the secreted. Functionally, beta toxins bind voltage-independently at site-4 of sodium channels (Nav) and shift the voltage of activation toward more negative potentials thereby affecting sodium channel activation and promoting spontaneous and repetitive firing. The chain is Putative beta-neurotoxin RjAa4 from Rhopalurus junceus (Caribbean blue scorpion).